Reading from the N-terminus, the 117-residue chain is MDKKATRLRRARRARAKIAELKVHRLSVHRTPRHMYAQIIAPDGGRTLVAASTVEKDLRSRAEGTGNCSAAAEVGRLIAERAKAAGVERVAFDRSGFKYHGRVKTLADAAREAGLQF.

The protein belongs to the universal ribosomal protein uL18 family. Part of the 50S ribosomal subunit; part of the 5S rRNA/L5/L18/L25 subcomplex. Contacts the 5S and 23S rRNAs.

Its function is as follows. This is one of the proteins that bind and probably mediate the attachment of the 5S RNA into the large ribosomal subunit, where it forms part of the central protuberance. In Alkalilimnicola ehrlichii (strain ATCC BAA-1101 / DSM 17681 / MLHE-1), this protein is Large ribosomal subunit protein uL18.